The following is a 585-amino-acid chain: Proline--tRNA ligase (585 aa).

This sequence belongs to the class-II aminoacyl-tRNA synthetase family. ProS type 1 subfamily. As to quaternary structure, homodimer.

It localises to the cytoplasm. The enzyme catalyses tRNA(Pro) + L-proline + ATP = L-prolyl-tRNA(Pro) + AMP + diphosphate. Catalyzes the attachment of proline to tRNA(Pro) in a two-step reaction: proline is first activated by ATP to form Pro-AMP and then transferred to the acceptor end of tRNA(Pro). As ProRS can inadvertently accommodate and process non-cognate amino acids such as alanine and cysteine, to avoid such errors it has two additional distinct editing activities against alanine. One activity is designated as 'pretransfer' editing and involves the tRNA(Pro)-independent hydrolysis of activated Ala-AMP. The other activity is designated 'posttransfer' editing and involves deacylation of mischarged Ala-tRNA(Pro). The misacylated Cys-tRNA(Pro) is not edited by ProRS. The protein is Proline--tRNA ligase of Nocardia farcinica (strain IFM 10152).